A 208-amino-acid polypeptide reads, in one-letter code: Cytochrome c biogenesis ATP-binding export protein CcmA (208 aa).

The ABC transporter domain maps to 2 to 206 (LEAKELTCAR…IRLTAEGRDE (205 aa)). Residue 34–41 (GPNGAGKT) coordinates ATP.

It belongs to the ABC transporter superfamily. CcmA exporter (TC 3.A.1.107) family. In terms of assembly, the complex is composed of two ATP-binding proteins (CcmA) and two transmembrane proteins (CcmB).

It is found in the cell inner membrane. It catalyses the reaction heme b(in) + ATP + H2O = heme b(out) + ADP + phosphate + H(+). Part of the ABC transporter complex CcmAB involved in the biogenesis of c-type cytochromes; once thought to export heme, this seems not to be the case, but its exact role is uncertain. Responsible for energy coupling to the transport system. The protein is Cytochrome c biogenesis ATP-binding export protein CcmA of Tatumella citrea (Pantoea citrea).